The sequence spans 459 residues: Argininosuccinate lyase (459 aa).

It belongs to the lyase 1 family. Argininosuccinate lyase subfamily.

The protein localises to the cytoplasm. The catalysed reaction is 2-(N(omega)-L-arginino)succinate = fumarate + L-arginine. Its pathway is amino-acid biosynthesis; L-arginine biosynthesis; L-arginine from L-ornithine and carbamoyl phosphate: step 3/3. In Prochlorococcus marinus (strain AS9601), this protein is Argininosuccinate lyase.